We begin with the raw amino-acid sequence, 213 residues long: ATP-dependent Clp protease proteolytic subunit (213 aa).

The active-site Nucleophile is the S114. H139 is a catalytic residue.

The protein belongs to the peptidase S14 family. In terms of assembly, fourteen ClpP subunits assemble into 2 heptameric rings which stack back to back to give a disk-like structure with a central cavity, resembling the structure of eukaryotic proteasomes.

The protein localises to the cytoplasm. The enzyme catalyses Hydrolysis of proteins to small peptides in the presence of ATP and magnesium. alpha-casein is the usual test substrate. In the absence of ATP, only oligopeptides shorter than five residues are hydrolyzed (such as succinyl-Leu-Tyr-|-NHMec, and Leu-Tyr-Leu-|-Tyr-Trp, in which cleavage of the -Tyr-|-Leu- and -Tyr-|-Trp bonds also occurs).. Cleaves peptides in various proteins in a process that requires ATP hydrolysis. Has a chymotrypsin-like activity. Plays a major role in the degradation of misfolded proteins. The protein is ATP-dependent Clp protease proteolytic subunit of Pseudomonas putida (strain GB-1).